The following is a 373-amino-acid chain: P2Y purinoceptor 1 (373 aa).

Residues Met-1–Phe-51 are Extracellular-facing. 2 N-linked (GlcNAc...) asparagine glycosylation sites follow: Asn-11 and Asn-27. Intrachain disulfides connect Cys-42-Cys-296 and Cys-124-Cys-202. Residue Lys-46 participates in ADP binding. A helical transmembrane segment spans residues Tyr-52–Trp-74. The Cytoplasmic segment spans residues Met-75–Ser-87. A helical transmembrane segment spans residues Val-88–Phe-109. Residues Tyr-110–Lys-125 are Extracellular-facing. Asn-113 is a glycosylation site (N-linked (GlcNAc...) asparagine). A helical membrane pass occupies residues Leu-126 to Ala-147. The Cytoplasmic segment spans residues His-148–Lys-166. Residues Asn-167–Phe-188 traverse the membrane as a helical segment. Topologically, residues Tyr-189–Tyr-214 are extracellular. Asn-197 carries N-linked (GlcNAc...) asparagine glycosylation. Tyr-203 to Thr-205 provides a ligand contact to ADP. Residues Phe-215–Tyr-237 form a helical membrane-spanning segment. The Cytoplasmic segment spans residues Gly-238 to Tyr-260. A helical transmembrane segment spans residues Leu-261–Leu-284. ADP is bound by residues Asn-283–Arg-287, Tyr-303–Tyr-306, and Arg-310. The Extracellular segment spans residues Arg-285–Tyr-303. A helical membrane pass occupies residues Ala-304–Phe-325. Residues Leu-326–Leu-373 lie on the Cytoplasmic side of the membrane.

This sequence belongs to the G-protein coupled receptor 1 family.

The protein localises to the cell membrane. Its activity is regulated as follows. ATP functions as antagonist and inhibits ADP-induced mobilization of Ca(2+). The P2Y1 receptor-specific antagonists A3P5PS, A3P5P and A2P5P inhibit downstream signaling mediated by mobilization of Ca(2+) from intracellular stores, and platelet shape changes in response to extracellular ADP. In terms of biological role, receptor for extracellular adenine nucleotides such as ADP. In platelets, binding to ADP leads to mobilization of intracellular calcium ions via activation of phospholipase C, a change in platelet shape, and ultimately platelet aggregation. This Homo sapiens (Human) protein is P2Y purinoceptor 1 (P2RY1).